Here is a 190-residue protein sequence, read N- to C-terminus: Anthranilate synthase component 2 (190 aa).

One can recognise a Glutamine amidotransferase type-1 domain in the interval 1–190; sequence MILLIDNYDS…ILQNFINCLN (190 aa). Residue 52-54 participates in L-glutamine binding; sequence CPG. The active-site Nucleophile; for GATase activity is C79. Residues Q83 and 129–130 each bind L-glutamine; that span reads SL. Catalysis depends on residues H169 and E171.

In terms of assembly, tetramer of two components I and two components II.

Its subcellular location is the plastid. It is found in the cyanelle. It carries out the reaction chorismate + L-glutamine = anthranilate + pyruvate + L-glutamate + H(+). The protein operates within amino-acid biosynthesis; L-tryptophan biosynthesis; L-tryptophan from chorismate: step 1/5. The protein is Anthranilate synthase component 2 (trpG) of Cyanophora paradoxa.